Consider the following 167-residue polypeptide: Large ribosomal subunit protein uL10 (167 aa).

The protein belongs to the universal ribosomal protein uL10 family. In terms of assembly, part of the ribosomal stalk of the 50S ribosomal subunit. The N-terminus interacts with L11 and the large rRNA to form the base of the stalk. The C-terminus forms an elongated spine to which L12 dimers bind in a sequential fashion forming a multimeric L10(L12)X complex.

Forms part of the ribosomal stalk, playing a central role in the interaction of the ribosome with GTP-bound translation factors. The chain is Large ribosomal subunit protein uL10 from Cytophaga hutchinsonii (strain ATCC 33406 / DSM 1761 / CIP 103989 / NBRC 15051 / NCIMB 9469 / D465).